The following is a 442-amino-acid chain: MELLSRVLLWKLLLLQSSAVLSSGPSGTAAASSSLVSESVVSLAAGTQAVLRCQSPRMVWTQDRLHDRQRVVHWDLSGGPGSQRRRLVDMYSAGEQRVYEPRDRDRLLLSPSAFHDGNFSLLIRAVDRGDEGVYTCNLHHHYCHLDESLAVRLEVTEDPLLSRAYWDGEKEVLVVAHGAPALMTCINRAHVWTDRHLEEAQQVVHWDRQLPGVSHDRADRLLDLYASGERRAYGPPFLRDRVSVNTNAFARGDFSLRIDELERADEGIYSCHLHHHYCGLHERRVFHLQVTEPAFEPPARASPGNGSGHSSAPSPDPTLTRGHSIINVIVPEDHTHFFQQLGYVLATLLLFILLLITVVLATRYRHSGGCKTSDKKAGKSKGKDVNMVEFAVATRDQAPYRTEDIQLDYKNNILKERAELAHSPLPAKDVDLDKEFRKEYCK.

The signal sequence occupies residues M1 to A19. Topologically, residues V20 to Q340 are extracellular. 2 consecutive Ig-like V-type domains span residues P25–T156 and P159–T291. Cystine bridges form between C53–C136 and C185–C271. A glycan (N-linked (GlcNAc...) asparagine) is linked at N118. The short motif at R128–D130 is the RGD 1 element. S227 bears the Phosphoserine mark. The RGD 2 signature appears at R251–D253. Positions E296 to L319 are disordered. N305 carries an N-linked (GlcNAc...) asparagine glycan. The helical transmembrane segment at L341–A361 threads the bilayer. Residues T362–K442 lie on the Cytoplasmic side of the membrane.

Homodimer in cis. Does not appear to form trans-homodimers. Interacts with ITGB3; the interaction inhibits ITGAV:ITGB3 heterodimer formation. As to expression, widely expressed (at protein level). Highly expressed in brain where it localizes to the glia limitans, which is formed by the endfeet of astrocytes surrounding capillaries, and beneath the pia mater (at protein level). In lung, detected in epithelial cells of the bronchus (at protein level). Expressed in intercalated disks in the heart (at protein level). Detected in pancreatic alpha-cells in the islet of Langerhans (at protein level). In kidney, found in the brush border of the proximal convoluted tubule (at protein level). Expressed in the epithelium of the small intestine (at protein level). Weakly expressed in liver (at protein level). Detected in myeloid cells.

The protein localises to the cell membrane. The protein resides in the cell junction. Its subcellular location is the tight junction. It localises to the cytoplasm. It is found in the cell projection. The protein localises to the cilium membrane. The protein resides in the nucleus. Transmembrane protein which can modulate activity of various signaling pathways, probably via binding to integrin ITGAV:ITGB3. Mediates heterophilic cell-cell interactions in vitro. Inhibits osteoclastogenesis downstream of TNFSF11/RANKL and CSF1, where it may function by attenuating signaling via integrin ITGB3 and MAP kinase p38. Plays a role in cartilage formation where it promotes proliferation and maturation of growth plate chondrocytes. Stimulates formation of primary cilia in chondrocytes. Enhances expression of genes involved in the hedgehog signaling pathway in chondrocytes, including the hedgehog signaling molecule IHH; may also promote signaling via the PTHLH/PTHrP pathway. Plays a role in angiogenesis where it suppresses migration of endothelial cells and also promotes their apoptosis. Inhibits VEGF-induced activation of AKT and p38 MAP kinase in endothelial cells. Also inhibits VTN (vitronectin)-mediated integrin ITGAV:ITGB3 signaling and activation of PTK2/FAK. May play a role in the maturation and maintenance of the blood-brain barrier. This is Matrix remodeling-associated protein 8 from Mus musculus (Mouse).